A 337-amino-acid polypeptide reads, in one-letter code: tRNA N6-adenosine threonylcarbamoyltransferase (337 aa).

Fe cation is bound by residues histidine 111 and histidine 115. Substrate-binding positions include 134–138, aspartate 167, glycine 180, and asparagine 272; that span reads LVSGG. A Fe cation-binding site is contributed by aspartate 300.

Belongs to the KAE1 / TsaD family. It depends on Fe(2+) as a cofactor.

Its subcellular location is the cytoplasm. The catalysed reaction is L-threonylcarbamoyladenylate + adenosine(37) in tRNA = N(6)-L-threonylcarbamoyladenosine(37) in tRNA + AMP + H(+). Functionally, required for the formation of a threonylcarbamoyl group on adenosine at position 37 (t(6)A37) in tRNAs that read codons beginning with adenine. Is involved in the transfer of the threonylcarbamoyl moiety of threonylcarbamoyl-AMP (TC-AMP) to the N6 group of A37, together with TsaE and TsaB. TsaD likely plays a direct catalytic role in this reaction. This is tRNA N6-adenosine threonylcarbamoyltransferase from Salmonella arizonae (strain ATCC BAA-731 / CDC346-86 / RSK2980).